The sequence spans 211 residues: MENTEKGTIIAISMAAFLFVVVSLSIIGYLISFTKREFKPRFINKKILIILFTVLGINLPIVILGFLFQFVINLSSTAPLIIMIVLAFGLTVGVGIYIFLFLQLIAVGIDEKEIAFLGERILIRKITRVERNDKTNQLVIYYIEGSRSKKKCRFSLASQAGQFMFNNVNLLNQEIMPFVDGQAEPELKVSEQENSEAPVSEPKEDEKTKKD.

A disordered region spans residues 187 to 211; the sequence is LKVSEQENSEAPVSEPKEDEKTKKD. A compositionally biased stretch (basic and acidic residues) spans 201–211; the sequence is EPKEDEKTKKD.

This is an uncharacterized protein from Spiroplasma citri.